A 407-amino-acid chain; its full sequence is Argininosuccinate synthase (407 aa).

ATP-binding positions include 16–24 (AYSGGLDTS) and alanine 44. L-citrulline contacts are provided by tyrosine 96 and serine 101. Glycine 126 contributes to the ATP binding site. L-aspartate is bound by residues threonine 128, asparagine 132, and aspartate 133. Asparagine 132 lines the L-citrulline pocket. L-citrulline is bound by residues arginine 136, serine 185, serine 194, glutamate 270, and tyrosine 282.

Belongs to the argininosuccinate synthase family. Type 1 subfamily. In terms of assembly, homotetramer.

The protein localises to the cytoplasm. The enzyme catalyses L-citrulline + L-aspartate + ATP = 2-(N(omega)-L-arginino)succinate + AMP + diphosphate + H(+). It functions in the pathway amino-acid biosynthesis; L-arginine biosynthesis; L-arginine from L-ornithine and carbamoyl phosphate: step 2/3. In Shewanella loihica (strain ATCC BAA-1088 / PV-4), this protein is Argininosuccinate synthase.